The sequence spans 301 residues: Probable alpha-L-glutamate ligase (301 aa).

The region spanning 104–287 (LQLLSRKGIG…VAGIIIEYLE (184 aa)) is the ATP-grasp domain. ATP is bound by residues K141, 178–179 (EY), D187, and 211–213 (RSN). Mg(2+) is bound by residues D248, E260, and N262. Residues D248, E260, and N262 each coordinate Mn(2+).

This sequence belongs to the RimK family. The cofactor is Mg(2+). It depends on Mn(2+) as a cofactor.

The chain is Probable alpha-L-glutamate ligase from Azotobacter vinelandii (strain DJ / ATCC BAA-1303).